The sequence spans 65 residues: Prokaryotic ubiquitin-like protein UBact (65 aa).

Positions 1-17 (MEVNMPTTEQGQKNKQM) are enriched in polar residues. The disordered stretch occupies residues 1–65 (MEVNMPTTEQ…ARRYRQRTGE (65 aa)). Over residues 35-65 (KVEKPNTEEILKRMRKVDPDQARRYRQRTGE) the composition is skewed to basic and acidic residues. Residue Glu65 forms an Isoglutamyl lysine isopeptide (Glu-Lys) (interchain with K-? in acceptor proteins) linkage.

This sequence belongs to the ubiquitin-like protein UBact family.

May function as a protein modifier covalently attached to lysine residues of substrate proteins. This may serve to target the modified proteins for degradation by proteasomes. The sequence is that of Prokaryotic ubiquitin-like protein UBact from Methylacidiphilum infernorum (isolate V4) (Methylokorus infernorum (strain V4)).